The primary structure comprises 1088 residues: Myocardin-related transcription factor B (1088 aa).

E22 is modified (phosphoserine). The stretch at 40–65 is one RPEL 1 repeat; it reads EVLQLRLQQRRTREQLVDQGIMPPLK. S66 bears the Phosphoserine mark. RPEL repeat units lie at residues 84 to 109 and 128 to 153; these read NFLK…EETF and DDLN…PVDS. 4 disordered regions span residues 165–310, 349–389, 472–508, and 528–553; these read EDYP…NEPQ, KPLN…PSSL, AELP…STDD, and LSSS…SNLE. Residues 197-213 are compositionally biased toward low complexity; sequence SAASPSEPKVSESPSPV. The segment covering 214–226 has biased composition (polar residues); that stretch reads TTNTPAQFASVSP. Positions 238–248 are enriched in pro residues; the sequence is ADQPPPRPAAP. Residues 272–287 show a composition bias toward basic and acidic residues; the sequence is NPNDKHRSKKCKDPKP. Over residues 355–366 the composition is skewed to low complexity; it reads NSNSGNSALNNA. Phosphothreonine is present on residues T367 and T370. Residues 367 to 378 show a composition bias toward polar residues; sequence TPNTPRQNTSTP. In terms of domain architecture, SAP spans 389–423; sequence LDDLKVSELKTELKLRGLPVSGTKPDLIERLKPYQ. Positions 528–540 are enriched in polar residues; that stretch reads LSSSPLRMTNNED. S541 and S543 each carry phosphoserine. Residues 541–550 are compositionally biased toward low complexity; the sequence is SLSPTSSTLS. Positions 545-601 form a coiled coil; it reads TSSTLSNLELDAAEKDRKLQEKEKQIEELKRKLEQEQKLVEVLKMQLEVEKRGQQQR. Residues 563–591 are required for interaction with itself and with MRTFA; the sequence is LQEKEKQIEELKRKLEQEQKLVEVLKMQL. Disordered stretches follow at residues 595 to 655 and 829 to 886; these read KRGQ…QPVS and NAPL…STQA. Residue K628 forms a Glycyl lysine isopeptide (Lys-Gly) (interchain with G-Cter in SUMO1) linkage. Over residues 829 to 838 the composition is skewed to polar residues; it reads NAPLPSLQNG. Residues 867-879 are compositionally biased toward basic and acidic residues; it reads KTKDPPRYEEAIK. S921 is modified (phosphoserine).

In terms of assembly, interacts with MRTFA and SRF. O-glycosylated.

It is found in the nucleus. In terms of biological role, acts as a transcriptional coactivator of serum response factor (SRF). Required for skeletal myogenic differentiation. The polypeptide is Myocardin-related transcription factor B (Homo sapiens (Human)).